Reading from the N-terminus, the 257-residue chain is Pyridoxal phosphate homeostasis protein (257 aa).

Position 2 is an N-acetylserine (Ser2). An N6-(pyridoxal phosphate)lysine modification is found at Lys49.

This sequence belongs to the pyridoxal phosphate-binding protein YggS/PROSC family.

The protein resides in the cytoplasm. Its subcellular location is the nucleus. In terms of biological role, pyridoxal 5'-phosphate (PLP)-binding protein, which may be involved in intracellular homeostatic regulation of pyridoxal 5'-phosphate (PLP), the active form of vitamin B6. The sequence is that of Pyridoxal phosphate homeostasis protein from Saccharomyces cerevisiae (strain ATCC 204508 / S288c) (Baker's yeast).